A 124-amino-acid chain; its full sequence is MATTNQLIRKGRKVLKEKSGVPALQACPQRRGVCTRVYTTTPKKPNSAMRKVCRVRLTSGYEVSSYIGGEGHNLQEHSVVLIRGGRVKDLPGVRYHTVRGALDCAGVKDRKQGRSKYGAKKPKA.

Asp-89 carries the post-translational modification 3-methylthioaspartic acid.

It belongs to the universal ribosomal protein uS12 family. Part of the 30S ribosomal subunit. Contacts proteins S8 and S17. May interact with IF1 in the 30S initiation complex.

With S4 and S5 plays an important role in translational accuracy. Its function is as follows. Interacts with and stabilizes bases of the 16S rRNA that are involved in tRNA selection in the A site and with the mRNA backbone. Located at the interface of the 30S and 50S subunits, it traverses the body of the 30S subunit contacting proteins on the other side and probably holding the rRNA structure together. The combined cluster of proteins S8, S12 and S17 appears to hold together the shoulder and platform of the 30S subunit. The polypeptide is Small ribosomal subunit protein uS12 (Psychrobacter sp. (strain PRwf-1)).